Reading from the N-terminus, the 157-residue chain is MQRVGSSLPSGSQSASQCPSVAFTERNQVATLPVQRLTEDAAAVRDNVHTEDGFQMKLYAHGFTPEELLVQVNSGCLVVTGQRQLEGCNPDGTGFRVAQKVHQQMSLPPDLDPAAMTCCLTPSGQLCVRGQCRALPPSEAQTGPASRFRSRGSKKLA.

Residues 1–17 are compositionally biased toward low complexity; it reads MQRVGSSLPSGSQSASQ. Disordered regions lie at residues 1–20 and 136–157; these read MQRV…QCPS and PPSE…KKLA. The sHSP domain occupies 35-148; sequence QRLTEDAAAV…EAQTGPASRF (114 aa). The span at 148–157 shows a compositional bias: basic residues; that stretch reads FRSRGSKKLA.

This sequence belongs to the small heat shock protein (HSP20) family.

The protein localises to the cytoplasm. It is found in the nucleus. The protein is Heat shock protein beta-9 (HSPB9) of Bos taurus (Bovine).